The following is an 84-amino-acid chain: MSCKKGARQRLYVSLWLFYILVFAAATEMDFYSSECHSHTYEIVLNSFSSIWLLINLFLLLCSFAIFLKYWCYKTFASETVKGY.

A signal peptide spans methionine 1–alanine 26. Topologically, residues threonine 27–leucine 45 are virion surface. Residues asparagine 46–isoleucine 66 form a helical membrane-spanning segment. The Intravirion portion of the chain corresponds to phenylalanine 67–tyrosine 84.

The protein belongs to the herpesviridae glycoprotein N family. As to quaternary structure, interacts (via N-terminus) with gM (via N-terminus). The gM-gN heterodimer forms the gCII complex.

The protein localises to the virion membrane. Its subcellular location is the host membrane. The protein resides in the host Golgi apparatus. It localises to the host trans-Golgi network. Functionally, envelope glycoprotein necessary for proper maturation of gM and modulation of its membrane fusion activity. Also plays a critical role in virion morphogenesis. The protein is Envelope glycoprotein N of Human herpesvirus 6B (strain Z29) (HHV-6 variant B).